The chain runs to 956 residues: Plasma membrane ATPase 1 (956 aa).

Topologically, residues 1–65 (MAEKPEVLDA…EKKESKFLKF (65 aa)) are cytoplasmic. The helical transmembrane segment at 66–85 (LGFMWNPLSWVMEAAAIMAI) threads the bilayer. Residues 86–97 (ALANGGGKPPDW) are Extracellular-facing. The chain crosses the membrane as a helical span at residues 98–118 (QDFVGIITLLIINSTISFIEE). Residues 119–247 (NNAGNAAAAL…GHFQKVLTAI (129 aa)) lie on the Cytoplasmic side of the membrane. Residues 248–268 (GNFCICSIAVGMIIEIIVMYP) traverse the membrane as a helical segment. Topologically, residues 269–277 (IQHRKYRPG) are extracellular. The helical transmembrane segment at 278–295 (IDNLLVLLIGGIPIAMPT) threads the bilayer. Residues 296–646 (VLSVTMAIGS…LTSRAIFQRM (351 aa)) are Cytoplasmic-facing. Asp-333 (4-aspartylphosphate intermediate) is an active-site residue. Residues Asp-592 and Asp-596 each coordinate Mg(2+). Residues 647–666 (KNYTIYAVSITIRIVLGFML) traverse the membrane as a helical segment. Residues 667 to 674 (LALIWKFD) are Extracellular-facing. The helical transmembrane segment at 675–697 (FPPFMVLIIAILNDGTIMTISKD) threads the bilayer. Topologically, residues 698–713 (RVKPSPLPDSWKLAEI) are cytoplasmic. A helical transmembrane segment spans residues 714–734 (FTTGVVLGGYLAMMTVIFFWA). The Extracellular segment spans residues 735 to 759 (AYKTNFFPRIFGVSTLEKTATDDFR). The helical transmembrane segment at 760-780 (KLASAIYLQVSTISQALIFVT) threads the bilayer. The Cytoplasmic portion of the chain corresponds to 781–792 (RSRSWSFVERPG). The chain crosses the membrane as a helical span at residues 793–813 (LLLVFAFFVAQLVATLIAVYA). The Extracellular segment spans residues 814–821 (NWSFAAIE). The helical transmembrane segment at 822–842 (GIGWGWAGVIWLYNIVTYIPL) threads the bilayer. The Cytoplasmic portion of the chain corresponds to 843–956 (DLIKFLIRYA…IETIQQSYTV (114 aa)).

This sequence belongs to the cation transport ATPase (P-type) (TC 3.A.3) family. Type IIIA subfamily. As to quaternary structure, possibly exists as a homodimer or a homotrimer.

It localises to the cell membrane. The enzyme catalyses ATP + H2O + H(+)(in) = ADP + phosphate + 2 H(+)(out). Functionally, the plasma membrane ATPase of plants and fungi is a hydrogen ion pump. The proton gradient it generates drives the active transport of nutrients by H(+)-symport. The resulting external acidification and/or internal alkinization may mediate growth responses. The chain is Plasma membrane ATPase 1 (LHA1) from Solanum lycopersicum (Tomato).